The sequence spans 206 residues: N-(5'-phosphoribosyl)anthranilate isomerase (206 aa).

This sequence belongs to the TrpF family.

It carries out the reaction N-(5-phospho-beta-D-ribosyl)anthranilate = 1-(2-carboxyphenylamino)-1-deoxy-D-ribulose 5-phosphate. It functions in the pathway amino-acid biosynthesis; L-tryptophan biosynthesis; L-tryptophan from chorismate: step 3/5. The protein is N-(5'-phosphoribosyl)anthranilate isomerase of Nitrosococcus oceani (strain ATCC 19707 / BCRC 17464 / JCM 30415 / NCIMB 11848 / C-107).